We begin with the raw amino-acid sequence, 224 residues long: uncharacterized protein (224 aa).

The presence of the two linear plasmids, termed pGKL1 and pGKL2, in strains of Kluyveromyces lactis confers the killer phenotype to the host cell, by promoting the secretion of a toxin able to inhibit the growth of sensitive strains. This is an uncharacterized protein from Kluyveromyces lactis (strain ATCC 8585 / CBS 2359 / DSM 70799 / NBRC 1267 / NRRL Y-1140 / WM37) (Yeast).